Reading from the N-terminus, the 681-residue chain is Transmembrane protein 168-A (681 aa).

Transmembrane regions (helical) follow at residues 16-36 (FLRCLGYLSSFNLLVAVCLGM), 47-67 (MILVLFILGLFVSAIACILYY), 73-93 (SASLSLFHLWFGFLQGLLCFL), 135-155 (PVVITSSELLELLGFGVASIS), 156-176 (LVFDKSLAMIALTFALTALII), 184-204 (LALPNLACFSVIAAVTFFQSL), 252-272 (FSLFPLALVELLFFVVCAFKL), 281-301 (VIPGFCIFGLLWILCHMVFLV), and 346-365 (LVLFCLMSTIILGAVSWQVA). An N-linked (GlcNAc...) asparagine glycan is attached at Asn-517.

The protein belongs to the TMEM168 family.

It is found in the nucleus membrane. Functionally, plays a key role in maintaining the cardiac electrical stability by modulating cell surface expression of SCN5A. The chain is Transmembrane protein 168-A (tmem168a) from Danio rerio (Zebrafish).